We begin with the raw amino-acid sequence, 623 residues long: Set1/Ash2 histone methyltransferase complex subunit ASH2 (623 aa).

Over residues 1–18 (MAAAGAGPGPGVSAGPGP) the composition is skewed to gly residues. A PHD-type; atypical zinc finger spans residues 1-62 (MAAAGAGPGP…SGEAESGDAN (62 aa)). The disordered stretch occupies residues 1–99 (MAAAGAGPGP…MDTQAGSVDE (99 aa)). Residues 36-56 (AAGAGEGPSAAPGAEPSSGEA) are compositionally biased toward low complexity. The DNA-binding stretch occupies residues 63–172 (LVDVSGLETE…MCLSALANLT (110 aa)). A compositionally biased stretch (polar residues) spans 84-95 (GDTSEVMDTQAG). S96 is subject to Phosphoserine. The segment at 112–145 (CGICTKWFTADTFGIDTSSCLPFMTNYSFHCNVC) adopts a C4-type zinc-finger fold. Residues 230–247 (LVKEHPDPGSKDPEEDYP) are compositionally biased toward basic and acidic residues. The interval 230 to 326 (LVKEHPDPGS…AQRLPPHGYP (97 aa)) is disordered. Over residues 265-277 (NQKQSSAVSASGN) the composition is skewed to polar residues. Positions 278-290 (LNGGIAAGSSGKG) are enriched in gly residues. R291 bears the Asymmetric dimethylarginine; by PRMT1 and PRMT5 mark. S311 is modified (phosphoserine). The interval 311–623 (SDPLFSAQRL…DGRRSPPWEP (313 aa)) is interaction with RBBP5. In terms of domain architecture, B30.2/SPRY spans 355–578 (LDCWAGKPIP…VSINFGPSFK (224 aa)).

Interacts with HCFC1. Core component of several methyltransferase-containing complexes including MLL1/MLL, MLL2/3 (also named ASCOM complex) and MLL4/WBP7. Each complex is at least composed of ASH2L, RBBP5, WDR5, DPY30, one or more specific histone methyltransferases (KMT2A/MLL1, KMT2D/MLL2, KMT2C/MLL3 and KMT2B/MLL4), and the facultative components PAGR1, BACC1, CHD8, E2F6, HCFC1, HCFC2, HSP70, INO80C, KDM6A, KANSL1, LAS1L, MAX, MCRS1, MEN1, MGA, KAT8/MOF, NCOA6, PAXIP1/PTIP, PELP1, PHF20, PRP31, RING2, RUVB1/TIP49A, RUVB2/TIP49B, SENP3, TAF1, TAF4, TAF6, TAF7, TAF9, TEX10 and alpha- and beta-tubulin. Component of the SET1 complex, at least composed of the catalytic subunit (SETD1A or SETD1B), WDR5, WDR82, RBBP5, ASH2L/ASH2, CXXC1/CFP1, HCFC1 and DPY30. Found in a complex with RBBP5, ASH2L, DPY30, KMT2A, KMT2D and WDR5. Component of a histone methylation complex composed of at least ZNF335, RBBP5, ASH2L and WDR5; the complex may have histone H3-specific methyltransferase activity, however does not have specificity for 'Lys-4' of histone H3. Within the complex, interacts with ZNF335. Interacts with RBBP5. Components of this complex may associate with components of a nuclear receptor-mediated transcription complex to form a complex at least composed of ZNF335, HCFC1, CCAR2, EMSY, MKI67, RBBP5, ASH2L and WDR5. Within this complex also interacts with CCAR2 and EMSY. Interacts with DPY30. Interacts with SETD1A and SETD1B. Both monomethylated and dimethylated on arginine residues in the C-terminus. Arg-291 is the major site. Methylation is not required for nuclear localization, nor for MLL complex integrity or maintenance of global histone H3K4me3 levels. As to expression, ubiquitously expressed, with abundant expression in the heart, skeletal muscle and kidney. Low expression is seen in spleen, lung and testis.

The protein localises to the nucleus. In terms of biological role, transcriptional regulator. Component or associated component of some histone methyltransferase complexes which regulates transcription through recruitment of those complexes to gene promoters. Component of the Set1/Ash2 histone methyltransferase (HMT) complex, a complex that specifically methylates 'Lys-4' of histone H3, but not if the neighboring 'Lys-9' residue is already methylated. As part of the MLL1/MLL complex it is involved in methylation and dimethylation at 'Lys-4' of histone H3. May play a role in hematopoiesis. In association with RBBP5 and WDR5, stimulates the histone methyltransferase activities of KMT2A, KMT2B, KMT2C, KMT2D, SETD1A and SETD1B. The protein is Set1/Ash2 histone methyltransferase complex subunit ASH2 (Ash2l) of Mus musculus (Mouse).